Here is a 1408-residue protein sequence, read N- to C-terminus: DNA-directed RNA polymerase subunit beta' (1408 aa).

Cys-70, Cys-72, Cys-85, and Cys-88 together coordinate Zn(2+). Mg(2+) contacts are provided by Asp-460, Asp-462, and Asp-464. Zn(2+)-binding residues include Cys-814, Cys-888, Cys-895, and Cys-898.

This sequence belongs to the RNA polymerase beta' chain family. The RNAP catalytic core consists of 2 alpha, 1 beta, 1 beta' and 1 omega subunit. When a sigma factor is associated with the core the holoenzyme is formed, which can initiate transcription. The cofactor is Mg(2+). Zn(2+) serves as cofactor.

The catalysed reaction is RNA(n) + a ribonucleoside 5'-triphosphate = RNA(n+1) + diphosphate. In terms of biological role, DNA-dependent RNA polymerase catalyzes the transcription of DNA into RNA using the four ribonucleoside triphosphates as substrates. This is DNA-directed RNA polymerase subunit beta' from Shewanella frigidimarina (strain NCIMB 400).